The primary structure comprises 221 residues: Pre-rRNA-processing protein SRD1 (221 aa).

A compositionally biased stretch (polar residues) spans 101 to 110; that stretch reads SKNRVTSACN. Disordered regions lie at residues 101 to 121 and 137 to 161; these read SKNRVTSACNSERRTTSQEAN and ASITKKYSKKTTSRPKREKRQTILP. The segment covering 142–155 has biased composition (basic residues); that stretch reads KYSKKTTSRPKREK. The segment at 168-193 adopts a GATA-type zinc-finger fold; it reads CSKCKDTWTIQWRSGPDQNRELCSPC. The interval 201-221 is disordered; the sequence is LKKENEKKRQAADKRIDRNNP. Residues 203-221 show a composition bias toward basic and acidic residues; the sequence is KENEKKRQAADKRIDRNNP.

Its subcellular location is the cytoplasm. It localises to the nucleus. Functionally, plays a direct or indirect role in pre-rRNA processing. The protein is Pre-rRNA-processing protein SRD1 (SRD1) of Saccharomyces cerevisiae (strain ATCC 204508 / S288c) (Baker's yeast).